The following is a 393-amino-acid chain: Arginine biosynthesis bifunctional protein ArgJ (393 aa).

Residues T145, K171, T182, E265, N388, and S393 each coordinate substrate. Catalysis depends on T182, which acts as the Nucleophile.

Belongs to the ArgJ family. As to quaternary structure, heterotetramer of two alpha and two beta chains.

It localises to the cytoplasm. It carries out the reaction N(2)-acetyl-L-ornithine + L-glutamate = N-acetyl-L-glutamate + L-ornithine. It catalyses the reaction L-glutamate + acetyl-CoA = N-acetyl-L-glutamate + CoA + H(+). The protein operates within amino-acid biosynthesis; L-arginine biosynthesis; L-ornithine and N-acetyl-L-glutamate from L-glutamate and N(2)-acetyl-L-ornithine (cyclic): step 1/1. It functions in the pathway amino-acid biosynthesis; L-arginine biosynthesis; N(2)-acetyl-L-ornithine from L-glutamate: step 1/4. Catalyzes two activities which are involved in the cyclic version of arginine biosynthesis: the synthesis of N-acetylglutamate from glutamate and acetyl-CoA as the acetyl donor, and of ornithine by transacetylation between N(2)-acetylornithine and glutamate. The sequence is that of Arginine biosynthesis bifunctional protein ArgJ from Nitratidesulfovibrio vulgaris (strain ATCC 29579 / DSM 644 / CCUG 34227 / NCIMB 8303 / VKM B-1760 / Hildenborough) (Desulfovibrio vulgaris).